A 51-amino-acid chain; its full sequence is Insulin (51 aa).

Disulfide bonds link C7-C37, C19-C50, and C36-C41.

This sequence belongs to the insulin family. As to quaternary structure, heterodimer of a B chain and an A chain linked by two disulfide bonds.

It localises to the secreted. Insulin decreases blood glucose concentration. It increases cell permeability to monosaccharides, amino acids and fatty acids. It accelerates glycolysis, the pentose phosphate cycle, and glycogen synthesis in liver. In Anser anser anser (Western greylag goose), this protein is Insulin (INS).